A 287-amino-acid polypeptide reads, in one-letter code: Formamidopyrimidine-DNA glycosylase (287 aa).

Catalysis depends on Pro-2, which acts as the Schiff-base intermediate with DNA. The active-site Proton donor is Glu-3. The Proton donor; for beta-elimination activity role is filled by Lys-61. Positions 95, 115, and 157 each coordinate DNA. An FPG-type zinc finger spans residues 243 to 277 (NVYGRADQPCRRCGEPVRREAFMNRSSFSCPRCQP). The Proton donor; for delta-elimination activity role is filled by Arg-267.

The protein belongs to the FPG family. Monomer. Zn(2+) serves as cofactor.

It catalyses the reaction Hydrolysis of DNA containing ring-opened 7-methylguanine residues, releasing 2,6-diamino-4-hydroxy-5-(N-methyl)formamidopyrimidine.. The enzyme catalyses 2'-deoxyribonucleotide-(2'-deoxyribose 5'-phosphate)-2'-deoxyribonucleotide-DNA = a 3'-end 2'-deoxyribonucleotide-(2,3-dehydro-2,3-deoxyribose 5'-phosphate)-DNA + a 5'-end 5'-phospho-2'-deoxyribonucleoside-DNA + H(+). Functionally, involved in base excision repair of DNA damaged by oxidation or by mutagenic agents. Acts as a DNA glycosylase that recognizes and removes damaged bases. Has a preference for oxidized purines, such as 7,8-dihydro-8-oxoguanine (8-oxoG). Has AP (apurinic/apyrimidinic) lyase activity and introduces nicks in the DNA strand. Cleaves the DNA backbone by beta-delta elimination to generate a single-strand break at the site of the removed base with both 3'- and 5'-phosphates. The polypeptide is Formamidopyrimidine-DNA glycosylase (Salinispora tropica (strain ATCC BAA-916 / DSM 44818 / JCM 13857 / NBRC 105044 / CNB-440)).